The following is a 1117-amino-acid chain: Sodium-driven chloride bicarbonate exchanger (1117 aa).

The span at 1-14 shows a compositional bias: polar residues; that stretch reads MQSGTCESFQSLSH. 4 disordered regions span residues 1–26, 57–94, 244–312, and 456–475; these read MQSGTCESFQSLSHQRNDEEAVVDRG, GRKSHRRHRHRGHKHRKRDRERDSGLEDGRESPSFDTP, KQSE…PHQQ, and NGTAAHGEAEPHGGHSGPEL. The Cytoplasmic portion of the chain corresponds to 1 to 508; the sequence is MQSGTCESFQ…DFTDALSLQC (508 aa). Basic and acidic residues predominate over residues 15–26; the sequence is QRNDEEAVVDRG. Basic residues predominate over residues 58–75; it reads RKSHRRHRHRGHKHRKRD. Positions 76–89 are enriched in basic and acidic residues; that stretch reads RERDSGLEDGRESP. Position 88 is a phosphoserine (Ser88). Phosphothreonine is present on Thr93. Polar residues predominate over residues 247 to 263; that stretch reads EPNSMDKNAGQVVSPQS. At Ser275 the chain carries Phosphoserine. A helical membrane pass occupies residues 509-529; it reads LASFLFLYCACMSPVITFGGL. Over 530–537 the chain is Extracellular; the sequence is LGEATEGR. A helical membrane pass occupies residues 538–558; it reads ISAIESLFGASMTGIAYSLFG. At 559-561 the chain is on the cytoplasmic side; it reads GQP. Residues 562-582 traverse the membrane as a helical segment; sequence LTILGSTGPVLVFEKILFKFC. The Extracellular segment spans residues 583-595; that stretch reads KEYGLSYLSLRAS. A helical membrane pass occupies residues 596–616; sequence IGLWTATLCIILVATDASSLV. Residues 617-625 lie on the Cytoplasmic side of the membrane; sequence CYITRFTEE. A helical membrane pass occupies residues 626 to 646; that stretch reads AFASLICIIFIYEALEKLFEL. Residues 647 to 719 lie on the Extracellular side of the membrane; sequence SEAYPINMHN…VGRACGHEHP (73 aa). N-linked (GlcNAc...) asparagine glycosylation is found at Asn673, Asn676, Asn686, and Asn696. A helical transmembrane segment spans residues 720 to 740; it reads YVPDVLFWSVILFFSTVTLSA. The Cytoplasmic portion of the chain corresponds to 741-761; the sequence is TLKQFKTSRYFPTKVRSIVSD. A helical membrane pass occupies residues 762–782; sequence FAVFLTILCMVLIDYAIGIPS. Topologically, residues 783-808 are extracellular; the sequence is PKLQVPSVFKPTRDDRGWFVTPLGPN. A helical transmembrane segment spans residues 809 to 829; it reads PWWTVIAAIIPALLCTILIFM. The Cytoplasmic portion of the chain corresponds to 830-854; the sequence is DQQITAVIINRKEHKLKKGCGYHLD. A helical membrane pass occupies residues 855 to 875; it reads LLMVAVMLGVCSIMGLPWFVA. Residues 876 to 911 lie on the Extracellular side of the membrane; it reads ATVLSITHVNSLKLESECSAPGEQPKFLGIREQRVT. The helical transmembrane segment at 912 to 932 threads the bilayer; it reads GLMIFILMGSSVFMTSILKFI. Residues 933-934 lie on the Cytoplasmic side of the membrane; it reads PM. Residues 935–955 traverse the membrane as a helical segment; the sequence is PVLYGVFLYMGASSLKGIQFF. The Extracellular segment spans residues 956–997; that stretch reads DRIKLFWMPAKHQPDFIYLRHVPLRKVHLFTVIQMSCLGLLW. Residues 998 to 1018 traverse the membrane as a helical segment; that stretch reads IIKVSRAAIVFPMMVLALVFV. The Cytoplasmic segment spans residues 1019–1117; that stretch reads RKLMDFLFTK…SSFPSKSSPS (99 aa). Ser1056 and Ser1084 each carry phosphoserine.

This sequence belongs to the anion exchanger (TC 2.A.31) family. Post-translationally, N-glycosylated.

The protein localises to the basolateral cell membrane. It localises to the apical cell membrane. It is found in the cell projection. Its subcellular location is the dendrite. The protein resides in the axon. The protein localises to the perikaryon. It localises to the presynapse. It is found in the postsynapse. Sodium/bicarbonate cotransporter which plays an important role in regulating intracellular pH. Has been shown to act as a sodium/bicarbonate cotransporter in exchange for intracellular chloride. Has also been shown to act as a sodium/biocarbonate cotransporter which does not couple net influx of bicarbonate to net efflux of chloride, with the observed chloride efflux being due to chloride self-exchange. Controls neuronal pH and may contribute to the secretion of cerebrospinal fluid. Acting on presynaptic intracellular pH, it promotes GABA release, reduces the excitability of CA1 pyramidal neurons, and modulates short-term synaptic plasticity. Required in retinal cells to maintain normal pH which is necessary for normal vision. In the kidney, likely to mediate bicarbonate reclamation in the apical membrane of the proximal tubules. This is Sodium-driven chloride bicarbonate exchanger from Bos taurus (Bovine).